Here is a 395-residue protein sequence, read N- to C-terminus: Phosphopentomutase (395 aa).

Positions 14, 289, 294, 330, 331, and 342 each coordinate Mn(2+).

Belongs to the phosphopentomutase family. The cofactor is Mn(2+).

Its subcellular location is the cytoplasm. The enzyme catalyses 2-deoxy-alpha-D-ribose 1-phosphate = 2-deoxy-D-ribose 5-phosphate. It carries out the reaction alpha-D-ribose 1-phosphate = D-ribose 5-phosphate. The protein operates within carbohydrate degradation; 2-deoxy-D-ribose 1-phosphate degradation; D-glyceraldehyde 3-phosphate and acetaldehyde from 2-deoxy-alpha-D-ribose 1-phosphate: step 1/2. In terms of biological role, isomerase that catalyzes the conversion of deoxy-ribose 1-phosphate (dRib-1-P) and ribose 1-phosphate (Rib-1-P) to deoxy-ribose 5-phosphate (dRib-5-P) and ribose 5-phosphate (Rib-5-P), respectively. In Mycoplasmopsis pulmonis (strain UAB CTIP) (Mycoplasma pulmonis), this protein is Phosphopentomutase.